Reading from the N-terminus, the 133-residue chain is Phosphomevalonate dehydratase small subunit (133 aa).

The Proton acceptor role is filled by Ser62.

Belongs to the AcnX type II small subunit family. Heterodimer composed of a large subunit (PMDh-L) and a small subunit (PMDh-S).

The catalysed reaction is (R)-5-phosphomevalonate = (2E)-3-methyl-5-phosphooxypent-2-enoate + H2O. Its pathway is isoprenoid biosynthesis; isopentenyl diphosphate biosynthesis via mevalonate pathway. In terms of biological role, component of a hydro-lyase that catalyzes the dehydration of mevalonate 5-phosphate (MVA5P) to form trans-anhydromevalonate 5-phosphate (tAHMP). Involved in the archaeal mevalonate (MVA) pathway, which provides fundamental precursors for isoprenoid biosynthesis, such as isopentenyl diphosphate (IPP) and dimethylallyl diphosphate (DMAPP). This chain is Phosphomevalonate dehydratase small subunit, found in Thermococcus kodakarensis (strain ATCC BAA-918 / JCM 12380 / KOD1) (Pyrococcus kodakaraensis (strain KOD1)).